Consider the following 58-residue polypeptide: Large ribosomal subunit protein bL32 (58 aa).

This sequence belongs to the bacterial ribosomal protein bL32 family.

The polypeptide is Large ribosomal subunit protein bL32 (Caldicellulosiruptor saccharolyticus (strain ATCC 43494 / DSM 8903 / Tp8T 6331)).